The chain runs to 341 residues: Malate dehydrogenase 1, mitochondrial (341 aa).

Residues 1–22 constitute a mitochondrion transit peptide; it reads MFRSMLVRSSASAKQAVIRRSF. Residues 36-42 and Asp62 each bind NAD(+); that span reads GAAGGIG. Positions 109 and 115 each coordinate substrate. NAD(+)-binding positions include Asn122 and 145 to 147; that span reads ISN. Positions 147 and 181 each coordinate substrate. His205 serves as the catalytic Proton acceptor. Residue Met256 participates in NAD(+) binding.

The protein belongs to the LDH/MDH superfamily. MDH type 1 family. Homodimer. In terms of processing, forms intramolecular disulfide bonds. In terms of tissue distribution, expressed in rosette leaves.

Its subcellular location is the mitochondrion matrix. It catalyses the reaction (S)-malate + NAD(+) = oxaloacetate + NADH + H(+). Its activity is regulated as follows. Negatively regulated by ATP. Not redox-regulated. The formation of intramolecular disulfide bonds does not alter enzymatic activity. In terms of biological role, catalyzes a reversible NAD-dependent dehydrogenase reaction involved in central metabolism and redox homeostasis between organelle compartments. Required for carbon dioxide and energy partitioning in leaves. May limit photorespiration during the dark phase. Its activity is essential to shuttle reductants out from the mitochondria to support the photorespiratory flux. Can convert 2-oxoglutarate to (S)-2-hydroxyglutarate in vitro. This is Malate dehydrogenase 1, mitochondrial from Arabidopsis thaliana (Mouse-ear cress).